The following is a 209-amino-acid chain: Claudin-4 (209 aa).

The Cytoplasmic segment spans residues 1 to 7 (MASMGLQ). The interaction with EPHA2 stretch occupies residues 1-103 (MASMGLQVMG…GVLLSVVGGK (103 aa)). The chain crosses the membrane as a helical span at residues 8 to 28 (VMGIALAVLGWLAVMLCCALP). Residues 29-81 (MWRVTAFIGSNIVTSQTIWEGLWMNCVVQSTGQMQCKVYDSLLALPQDLQAAR) lie on the Extracellular side of the membrane. A disulfide bridge connects residues cysteine 54 and cysteine 64. A helical membrane pass occupies residues 82 to 102 (ALVIISIIVAALGVLLSVVGG). The Cytoplasmic segment spans residues 103–117 (KCTNCLEDESAKAKT). A helical membrane pass occupies residues 118-138 (MIVAGVVFLLAGLMVIVPVSW). Over 139-160 (TAHNIIQDFYNPLVASGQKREM) the chain is Extracellular. A helical membrane pass occupies residues 161–181 (GASLYVGWAASGLLLLGGGLL). The Cytoplasmic segment spans residues 182-209 (CCNCPPRTDKPYSAKYSAARSAAASNYV). Tyrosine 208 bears the Phosphotyrosine; by EPHA2 mark. Residues 208–209 (YV) form an interactions with TJP1, TJP2 and TJP3 region.

It belongs to the claudin family. In terms of assembly, can form heteropolymeric strands with other claudins. Interacts with CLDN8. Interacts with CLDN1. Directly interacts with TJP1/ZO-1. Interacts with TJP2/ZO-2 and TJP3/ZO-3. Interacts with EPHA2; phosphorylates CLDN4 and may regulate tight junctions. As to quaternary structure, (Microbial infection) Interacts (via both extracellular domains) with Clostridium perfringens enterotoxin CPE; the interaction may disrupt claudin assembly in tight junctions. In terms of processing, phosphorylated. Phosphorylation by EPHA2 is stimulated by EFNA1 and alters interaction with TJP1.

The protein resides in the cell junction. The protein localises to the tight junction. It localises to the cell membrane. It catalyses the reaction chloride(in) = chloride(out). The enzyme catalyses bromide(in) = bromide(out). It carries out the reaction iodide(out) = iodide(in). The catalysed reaction is fluoride(in) = fluoride(out). Functionally, can associate with other claudins to regulate tight junction structural and functional strand dynamics. May coassemble with CLDN8 into tight junction strands containing anion-selective channels that convey paracellular chloride permeability in renal collecting ducts. May integrate into CLDN3 strands to modulate localized tight junction barrier properties. May disrupt strand assembly of channel-forming CLDN2 and CLDN15 and inhibit cation conductance. Cannot form tight junction strands on its own. The sequence is that of Claudin-4 from Homo sapiens (Human).